We begin with the raw amino-acid sequence, 93 residues long: DNA/RNA-binding protein Alba (93 aa).

Lysine 11 is modified (N6-acetyllysine).

This sequence belongs to the histone-like Alba family. Acetylated. Acetylation at Lys-11 decreases DNA-binding affinity.

The protein localises to the cytoplasm. It localises to the chromosome. Binds double-stranded DNA tightly but without sequence specificity. Involved in DNA compaction. The protein is DNA/RNA-binding protein Alba of Pyrococcus furiosus (strain ATCC 43587 / DSM 3638 / JCM 8422 / Vc1).